A 615-amino-acid chain; its full sequence is Probable methylmalonyl-CoA mutase small subunit (615 aa).

This sequence belongs to the methylmalonyl-CoA mutase family. In terms of assembly, heterodimer of an alpha and a beta chain. Adenosylcob(III)alamin is required as a cofactor.

It catalyses the reaction (R)-methylmalonyl-CoA = succinyl-CoA. It participates in metabolic intermediate metabolism; propanoyl-CoA degradation; succinyl-CoA from propanoyl-CoA: step 3/3. Catalyzes the isomerization of succinyl-CoA to methylmalonyl-CoA during synthesis of propionate from tricarboxylic acid-cycle intermediates. This is Probable methylmalonyl-CoA mutase small subunit (mutA) from Mycobacterium bovis (strain ATCC BAA-935 / AF2122/97).